A 519-amino-acid polypeptide reads, in one-letter code: 2-isopropylmalate synthase (519 aa).

Positions 12–274 constitute a Pyruvate carboxyltransferase domain; the sequence is IRIFDTTLRD…DTSIHTSRIV (263 aa). Mn(2+) contacts are provided by Asp-21, His-209, His-211, and Asn-245. Residues 396–519 form a regulatory domain region; sequence RLASMTISDV…MQNKQNTALA (124 aa).

This sequence belongs to the alpha-IPM synthase/homocitrate synthase family. LeuA type 1 subfamily. As to quaternary structure, homodimer. Mn(2+) is required as a cofactor.

It is found in the cytoplasm. It catalyses the reaction 3-methyl-2-oxobutanoate + acetyl-CoA + H2O = (2S)-2-isopropylmalate + CoA + H(+). Its pathway is amino-acid biosynthesis; L-leucine biosynthesis; L-leucine from 3-methyl-2-oxobutanoate: step 1/4. Its function is as follows. Catalyzes the condensation of the acetyl group of acetyl-CoA with 3-methyl-2-oxobutanoate (2-ketoisovalerate) to form 3-carboxy-3-hydroxy-4-methylpentanoate (2-isopropylmalate). In Xylella fastidiosa (strain M23), this protein is 2-isopropylmalate synthase.